The sequence spans 503 residues: Podocalyxin (503 aa).

A signal peptide spans 1 to 21; the sequence is MPPTTALSALLLLLLSPASHS. Residues 19-236 form a disordered region; that stretch reads SHSHNGNETS…PLTSQTPGIT (218 aa). Positions 20-50 are enriched in polar residues; the sequence is HSHNGNETSTSAIKSSTVQSHQSATTSTEVT. At 22–404 the chain is on the extracellular side; that stretch reads HNGNETSTSA…PPEVNEDRFS (383 aa). N-linked (GlcNAc...) asparagine glycosylation is found at N25, N89, and N94. The span at 61 to 91 shows a compositional bias: low complexity; sequence STQPSNPTPFTTSTQSPSMPTSTPNPTSNQS. The span at 107-126 shows a compositional bias: low complexity; sequence TSSPSSTAFTSSSGQTASSG. Polar residues predominate over residues 131–183; the sequence is DSFTTAPTTTLGLINVSSQPTDLNTTSKLLSTPTTDNTTSPQQPVDSSPSTAS. N145, N154, N167, and N206 each carry an N-linked (GlcNAc...) asparagine glycan. The segment covering 196–208 has biased composition (low complexity); the sequence is SSSGSTPSTDNST. Residues 222–236 are compositionally biased toward polar residues; that stretch reads SEATQPLTSQTPGIT. N-linked (GlcNAc...) asparagine glycosylation is present at N303. Residues 405–425 traverse the membrane as a helical segment; the sequence is LPLIITIVCMASFLLLVAALY. The Cytoplasmic portion of the chain corresponds to 426–503; it reads GCCHQRISQR…DLDEEEDTHL (78 aa). Position 463 is a phosphothreonine (T463). Phosphoserine is present on S482. The residue at position 501 (T501) is a Phosphothreonine.

It belongs to the podocalyxin family. Monomer; when associated with the membrane raft. Oligomer; when integrated in the apical membrane. Found in a complex with EZR, PODXL and NHERF2. Associates with the actin cytoskeleton through complex formation with EZR and NHERF2. Interacts (via the C-terminal PDZ-binding motif DTHL) with NHERF1 (via the PDZ domains); interaction is not detected in glomerular epithelium cells, take place early in the secretory pathway and is necessary for its apical membrane sorting. Interacts (via the C-terminal PDZ-binding motif DTHL) with NHERF2 (via the PDZ 1 domain); interaction is detected in glomerular epithelium cells. Interacts with EZR. In terms of processing, N- and O-linked glycosylated. Sialoglycoprotein. In terms of tissue distribution, expressed in liver cells and hematopoietic cells (at protein level). Glomerular epithelium cell (podocyte).

The protein resides in the apical cell membrane. Its subcellular location is the cell projection. It localises to the microvillus. It is found in the membrane raft. The protein localises to the lamellipodium. The protein resides in the filopodium. Its subcellular location is the ruffle. It localises to the membrane. Involved in the regulation of both adhesion and cell morphology and cancer progression. Functions as an anti-adhesive molecule that maintains an open filtration pathway between neighboring foot processes in the podocyte by charge repulsion. Acts as a pro-adhesive molecule, enhancing the adherence of cells to immobilized ligands, increasing the rate of migration and cell-cell contacts in an integrin-dependent manner. Induces the formation of apical actin-dependent microvilli. Involved in the formation of a preapical plasma membrane subdomain to set up initial epithelial polarization and the apical lumen formation during renal tubulogenesis. Plays a role in cancer development and aggressiveness by inducing cell migration and invasion through its interaction with the actin-binding protein EZR. Affects EZR-dependent signaling events, leading to increased activities of the MAPK and PI3K pathways in cancer cells. This is Podocalyxin (Podxl) from Mus musculus (Mouse).